The chain runs to 274 residues: Large ribosomal subunit protein uL2 (274 aa).

Residues 223-256 (VAMNPVDHPHGGGEGRTSGGRHPVTPWGIPTKGY) form a disordered region.

Belongs to the universal ribosomal protein uL2 family. As to quaternary structure, part of the 50S ribosomal subunit. Forms a bridge to the 30S subunit in the 70S ribosome.

Its function is as follows. One of the primary rRNA binding proteins. Required for association of the 30S and 50S subunits to form the 70S ribosome, for tRNA binding and peptide bond formation. It has been suggested to have peptidyltransferase activity; this is somewhat controversial. Makes several contacts with the 16S rRNA in the 70S ribosome. This Trichlorobacter lovleyi (strain ATCC BAA-1151 / DSM 17278 / SZ) (Geobacter lovleyi) protein is Large ribosomal subunit protein uL2.